We begin with the raw amino-acid sequence, 675 residues long: Methionine--tRNA ligase (675 aa).

The 'HIGH' region motif lies at 12 to 22; the sequence is PYANGPIHLGH. Zn(2+) is bound by residues Cys-143, Cys-146, Cys-156, and Cys-159. A 'KMSKS' region motif is present at residues 328-332; the sequence is KMSKS. An ATP-binding site is contributed by Lys-331. The region spanning 574 to 675 is the tRNA-binding domain; sequence DFAKVDLRIA…QGAQPGMRVK (102 aa).

This sequence belongs to the class-I aminoacyl-tRNA synthetase family. MetG type 1 subfamily. In terms of assembly, homodimer. The cofactor is Zn(2+).

The protein resides in the cytoplasm. It catalyses the reaction tRNA(Met) + L-methionine + ATP = L-methionyl-tRNA(Met) + AMP + diphosphate. Is required not only for elongation of protein synthesis but also for the initiation of all mRNA translation through initiator tRNA(fMet) aminoacylation. This chain is Methionine--tRNA ligase, found in Alkalilimnicola ehrlichii (strain ATCC BAA-1101 / DSM 17681 / MLHE-1).